Consider the following 524-residue polypeptide: Phosphoenolpyruvate carboxykinase (ATP) (524 aa).

Substrate is bound by residues arginine 52, tyrosine 188, and lysine 194. Residues lysine 194, histidine 213, and glycine 229–threonine 237 each bind ATP. Mn(2+)-binding residues include lysine 194 and histidine 213. Aspartate 250 is a binding site for Mn(2+). Positions 278, 314, and 439 each coordinate ATP. A substrate-binding site is contributed by arginine 314.

It belongs to the phosphoenolpyruvate carboxykinase (ATP) family. The cofactor is Mn(2+).

The protein localises to the cytoplasm. It carries out the reaction oxaloacetate + ATP = phosphoenolpyruvate + ADP + CO2. It participates in carbohydrate biosynthesis; gluconeogenesis. Functionally, involved in the gluconeogenesis. Catalyzes the conversion of oxaloacetate (OAA) to phosphoenolpyruvate (PEP) through direct phosphoryl transfer between the nucleoside triphosphate and OAA. The protein is Phosphoenolpyruvate carboxykinase (ATP) of Campylobacter jejuni subsp. jejuni serotype O:23/36 (strain 81-176).